We begin with the raw amino-acid sequence, 205 residues long: Ras-related protein Rab-1A (205 aa).

Ser-2 is modified (N-acetylserine). 8 residues coordinate GTP: Ser-20, Gly-21, Gly-23, Lys-24, Ser-25, Cys-26, Glu-38, and Thr-43. Residue Ser-25 coordinates Mg(2+). The Switch 1 signature appears at 34 to 48; that stretch reads DTYTESYISTIGVDF. Thr-43 is a Mg(2+) binding site. Residues Lys-49 and Lys-61 each participate in a glycyl lysine isopeptide (Lys-Gly) (interchain with G-Cter in ubiquitin) cross-link. Asp-66 lines the Mg(2+) pocket. The Switch 2 motif lies at 66–83; that stretch reads DTAGQERFRTITSSYYRG. GTP contacts are provided by Gly-69, Asn-124, Lys-125, Asp-127, Ala-155, and Lys-156. Positions 178–205 are disordered; that stretch reads PGATAGGAEKSNVKIQSTPVKQSGGGCC. Position 194 is a phosphoserine; by CDK1 (Ser-194). Residues Cys-204 and Cys-205 are each lipidated (S-geranylgeranyl cysteine).

This sequence belongs to the small GTPase superfamily. Rab family. May interact with YIPF5. Interacts with C9orf72; the interaction mediates recruitment of RAB1A to the ATG1/ULK1 kinase complex. Interacts with GDI1; this promotes dissociation from membranes. The cofactor is Mg(2+). In terms of processing, phosphorylated by CDK1 kinase during mitosis. Post-translationally, ubiquitinated via 'Lys-11'-linked ubiquitination on Lys-49 and Lys-61; impairing the recruitment of guanosine diphosphate (GDP) dissociation inhibitor 1/GDI1.

The protein resides in the golgi apparatus. It is found in the endoplasmic reticulum. The protein localises to the early endosome. Its subcellular location is the cytoplasm. It localises to the cytosol. The protein resides in the membrane. It is found in the melanosome. It catalyses the reaction GTP + H2O = GDP + phosphate + H(+). Regulated by guanine nucleotide exchange factors (GEFs) which promote the exchange of bound GDP for free GTP. Regulated by GTPase activating proteins (GAPs) which increase the GTP hydrolysis activity. Inhibited by GDP dissociation inhibitors (GDIs). In terms of biological role, the small GTPases Rab are key regulators of intracellular membrane trafficking, from the formation of transport vesicles to their fusion with membranes. Rabs cycle between an inactive GDP-bound form and an active GTP-bound form that is able to recruit to membranes different sets of downstream effectors directly responsible for vesicle formation, movement, tethering and fusion. RAB1A regulates vesicular protein transport from the endoplasmic reticulum (ER) to the Golgi compartment and on to the cell surface, and plays a role in IL-8 and growth hormone secretion. Required to modulate the compacted morphology of the Golgi. Regulates the level of CASR present at the cell membrane. Plays a role in cell adhesion and cell migration, via its role in protein trafficking. Plays a role in autophagosome assembly and cellular defense reactions against pathogenic bacteria. Plays a role in microtubule-dependent protein transport by early endosomes and in anterograde melanosome transport. This chain is Ras-related protein Rab-1A (RAB1A), found in Sus scrofa (Pig).